We begin with the raw amino-acid sequence, 319 residues long: Phospho-N-acetylmuramoyl-pentapeptide-transferase (319 aa).

The next 10 membrane-spanning stretches (helical) occupy residues 5-25 (LIPFISSFALTVIFLPLFIGF), 51-71 (TMGGVVFMLAGVISTLWVLIW), 79-99 (AWILIIAFLGYGIIGFLDDGI), 116-136 (LGQIIIAALIITLAFSDHFAF), 149-169 (SFLFSLFVLFWLVGFSNAVNL), 172-192 (GLDGLATGLSIIAYATYAWIA), 197-217 (NWVIVVFTLSVIGGLVGFFIF), 224-244 (IFMGDAGSLALGGGLATVSIF), 252-272 (LLIGIVFVLETLSVILQVISF), and 299-319 (VDIVFWIVGLIGSIIYLIIWG).

This sequence belongs to the glycosyltransferase 4 family. MraY subfamily. Mg(2+) serves as cofactor.

It is found in the cell membrane. It carries out the reaction UDP-N-acetyl-alpha-D-muramoyl-L-alanyl-gamma-D-glutamyl-L-lysyl-D-alanyl-D-alanine + di-trans,octa-cis-undecaprenyl phosphate = Mur2Ac(oyl-L-Ala-gamma-D-Glu-L-Lys-D-Ala-D-Ala)-di-trans,octa-cis-undecaprenyl diphosphate + UMP. Its pathway is cell wall biogenesis; peptidoglycan biosynthesis. Catalyzes the initial step of the lipid cycle reactions in the biosynthesis of the cell wall peptidoglycan: transfers peptidoglycan precursor phospho-MurNAc-pentapeptide from UDP-MurNAc-pentapeptide onto the lipid carrier undecaprenyl phosphate, yielding undecaprenyl-pyrophosphoryl-MurNAc-pentapeptide, known as lipid I. The sequence is that of Phospho-N-acetylmuramoyl-pentapeptide-transferase from Lactobacillus johnsonii (strain CNCM I-12250 / La1 / NCC 533).